Here is a 186-residue protein sequence, read N- to C-terminus: MEKYLIVGLGNPGSNYAKTRHNVGFMVINEICNKLNLSLDSSKFNGIFTKTIYNNSIVFFCQPTTYMNLSGEFVIKMLNFYNIPIKNLIVIYDDVDTKLGTIKLRKKGSSGGQNGIKNIINILKTDEIKRIRIGIDKDPHIKLDQYVLSNFKIDELVIIKPAIIKGALATLAAIGEDFDKVMNKFN.

Residue Y16 coordinates tRNA. Catalysis depends on H21, which acts as the Proton acceptor. 3 residues coordinate tRNA: Y66, N68, and N114.

The protein belongs to the PTH family. Monomer.

The protein localises to the cytoplasm. It catalyses the reaction an N-acyl-L-alpha-aminoacyl-tRNA + H2O = an N-acyl-L-amino acid + a tRNA + H(+). Hydrolyzes ribosome-free peptidyl-tRNAs (with 1 or more amino acids incorporated), which drop off the ribosome during protein synthesis, or as a result of ribosome stalling. In terms of biological role, catalyzes the release of premature peptidyl moieties from peptidyl-tRNA molecules trapped in stalled 50S ribosomal subunits, and thus maintains levels of free tRNAs and 50S ribosomes. The polypeptide is Peptidyl-tRNA hydrolase (Ureaplasma parvum serovar 3 (strain ATCC 700970)).